The sequence spans 1396 residues: DNA-directed RNA polymerase subunit beta (1396 aa).

This sequence belongs to the RNA polymerase beta chain family. The RNAP catalytic core consists of 2 alpha, 1 beta, 1 beta' and 1 omega subunit. When a sigma factor is associated with the core the holoenzyme is formed, which can initiate transcription.

It carries out the reaction RNA(n) + a ribonucleoside 5'-triphosphate = RNA(n+1) + diphosphate. Functionally, DNA-dependent RNA polymerase catalyzes the transcription of DNA into RNA using the four ribonucleoside triphosphates as substrates. The chain is DNA-directed RNA polymerase subunit beta from Erythrobacter litoralis (strain HTCC2594).